The chain runs to 112 residues: MVTEKKTKKSHEGINSRLALVMKSGKYTLGYKSVLKSLRGSKGKLILISTNCPPLRRSEIEYYAMLAKVGVHHYNGNNVDLGTACGKYFRVSCLSIVDPGDSDIIKSIPGDQ.

This sequence belongs to the eukaryotic ribosomal protein eL30 family.

The chain is Large ribosomal subunit protein eL30y (RPL30B) from Arabidopsis thaliana (Mouse-ear cress).